Here is a 492-residue protein sequence, read N- to C-terminus: Aerolysin-3 (492 aa).

Positions 1 to 23 (MKKLKITGLSLIISGLLMAQAQA) are cleaved as a signal peptide. 2 cysteine pairs are disulfide-bonded: Cys-42/Cys-98 and Cys-182/Cys-187. The segment at 68-84 (WQISGLANGWVIMGPGY) is interaction with host N-linked glycan. The part of the transmembrane beta-barrel after proteolytic activation of the toxin and insertion into the host membrane stretch occupies residues 256 to 288 (YGLSEKVTTKNKFKWPLVGETELSIEIAANQSW). Positions 346-355 (RWGGNAWYTH) are interaction with glycans from host GPI-anchor. Residues 446-492 (AAASHSSRARNLSAGQGLRLEIPLDAQELSGLGFNNVSLSVTPAANQ) constitute a propeptide that is removed on maturation.

It belongs to the aerolysin family. Homodimer in solution; homoheptamer in the host membrane. After binding to GPI-anchored proteins in target membranes and proteolytic removal of the C-terminal propeptide, the protein assembles into a heptameric pre-pore complex. A further conformation change leads to insertion into the host membrane. Proteolytic cleavage and subsequent release of the propeptide trigger a major conformation change, leading to the formation of a heptameric pre-pore that then inserts into the host membrane.

It is found in the secreted. Its subcellular location is the host cell membrane. Functionally, secreted, cytolytic toxin that forms pores in host membranes after proteolytic removal of a C-terminal propeptide, leading to destruction of the membrane permeability barrier and cell death. The pores are formed by transmembrane beta-strands and are approximately 3 nm in diameter. In Aeromonas hydrophila, this protein is Aerolysin-3 (ahh3).